The chain runs to 427 residues: Tol-Pal system protein TolB (427 aa).

Positions 1–23 (MKLLKRLVSVFAIVLAVGSNAFA) are cleaved as a signal peptide.

This sequence belongs to the TolB family. The Tol-Pal system is composed of five core proteins: the inner membrane proteins TolA, TolQ and TolR, the periplasmic protein TolB and the outer membrane protein Pal. They form a network linking the inner and outer membranes and the peptidoglycan layer.

The protein resides in the periplasm. In terms of biological role, part of the Tol-Pal system, which plays a role in outer membrane invagination during cell division and is important for maintaining outer membrane integrity. This Haemophilus influenzae (strain PittEE) protein is Tol-Pal system protein TolB.